A 371-amino-acid chain; its full sequence is MRESWGASLKTICLIGGKLQGFEAAYLSKKAGMKVLVIDKNPQALIRNYADEFQCFNITEEPEKLVAISKNVDAILPVNENLECIEFLNSIKEKFSCPVLFDFEAYRISRDKRKSKEYFASIGTPTPQDKPSEPPYFVKPPCESSSVGARIIHDRKELKELEPGMLIEEYVEGEVVSLEVIGDGNNFAVVKETLVHIDDTYDCHMVTPLPLDPSFRELSYSLAANLPLKGIMDVEAISGPLGLKVIEIDARFPSQTPTAVYYSSGINLIELLFRAFNGGIEEIKTLPEDRYCIYEHLMLAENGVLIPVGEQVLSMGNDYGNYYEEPGIEIFLCKGENPVFTLVFWGRDREEAEARKNKGLSILKSRFGAAA.

Lys18 contacts ATP. Position 19–20 (19–20 (LQ)) interacts with L-lysine. Residues Asp39, 57-58 (NI), and 80-81 (EN) contribute to the ATP site. Glu80 contributes to the L-lysine binding site. The region spanning 93-277 (EKFSCPVLFD…LIELLFRAFN (185 aa)) is the ATP-grasp domain. ADP contacts are provided by residues Lys112, Lys139, Ser146, and 168–171 (EEYV). D-ornithine is bound by residues 177 to 179 (SLE) and Asp233. Mg(2+) is bound by residues Glu235, Glu247, and Asp249. Glu247 provides a ligand contact to ADP. Residues 251-256 (RFPSQT) and Glu310 contribute to the D-ornithine site. Residues Ser254 and Glu310 each coordinate L-lysine.

The protein belongs to the PylC family. Mg(2+) is required as a cofactor.

The enzyme catalyses (3R)-3-methyl-D-ornithine + L-lysine + ATP = (3R)-3-methyl-D-ornithyl-N(6)-L-lysine + ADP + phosphate + H(+). The protein operates within amino-acid biosynthesis; L-pyrrolysine biosynthesis. Its function is as follows. Is required for the biosynthesis of pyrrolysine. Catalyzes the ATP-dependent ligation between (3R)-3-methyl-D-ornithine and L-lysine, leading to (3R)-3-methyl-D-ornithyl-N6-L-lysine. Is also involved in the synthesis of pyrroline-carboxy-lysine (Pcl), a demethylated form of pyrrolysine that is generated by the pyrrolysine biosynthetic enzymes when the growth media is supplemented with D-ornithine. This chain is 3-methyl-D-ornithine--L-lysine ligase, found in Methanosarcina mazei (strain ATCC BAA-159 / DSM 3647 / Goe1 / Go1 / JCM 11833 / OCM 88) (Methanosarcina frisia).